Here is a 398-residue protein sequence, read N- to C-terminus: 4-hydroxy-3-methylbut-2-enyl diphosphate reductase (398 aa).

Position 66 (Cys66) interacts with [4Fe-4S] cluster. His96 is a binding site for (2E)-4-hydroxy-3-methylbut-2-enyl diphosphate. Residue His96 participates in dimethylallyl diphosphate binding. His96 is a binding site for isopentenyl diphosphate. Cys157 is a [4Fe-4S] cluster binding site. A (2E)-4-hydroxy-3-methylbut-2-enyl diphosphate-binding site is contributed by His185. His185 is a binding site for dimethylallyl diphosphate. His185 is a binding site for isopentenyl diphosphate. Residue Glu187 is the Proton donor of the active site. Thr250 lines the (2E)-4-hydroxy-3-methylbut-2-enyl diphosphate pocket. Cys288 is a [4Fe-4S] cluster binding site. (2E)-4-hydroxy-3-methylbut-2-enyl diphosphate-binding residues include Ser317, Ser318, Asn319, and Ser380. Ser317, Ser318, Asn319, and Ser380 together coordinate dimethylallyl diphosphate. Isopentenyl diphosphate is bound by residues Ser317, Ser318, Asn319, and Ser380.

This sequence belongs to the IspH family. Requires [4Fe-4S] cluster as cofactor.

The catalysed reaction is isopentenyl diphosphate + 2 oxidized [2Fe-2S]-[ferredoxin] + H2O = (2E)-4-hydroxy-3-methylbut-2-enyl diphosphate + 2 reduced [2Fe-2S]-[ferredoxin] + 2 H(+). It catalyses the reaction dimethylallyl diphosphate + 2 oxidized [2Fe-2S]-[ferredoxin] + H2O = (2E)-4-hydroxy-3-methylbut-2-enyl diphosphate + 2 reduced [2Fe-2S]-[ferredoxin] + 2 H(+). It participates in isoprenoid biosynthesis; dimethylallyl diphosphate biosynthesis; dimethylallyl diphosphate from (2E)-4-hydroxy-3-methylbutenyl diphosphate: step 1/1. It functions in the pathway isoprenoid biosynthesis; isopentenyl diphosphate biosynthesis via DXP pathway; isopentenyl diphosphate from 1-deoxy-D-xylulose 5-phosphate: step 6/6. Its function is as follows. Catalyzes the conversion of 1-hydroxy-2-methyl-2-(E)-butenyl 4-diphosphate (HMBPP) into a mixture of isopentenyl diphosphate (IPP) and dimethylallyl diphosphate (DMAPP). Acts in the terminal step of the DOXP/MEP pathway for isoprenoid precursor biosynthesis. This Prochlorococcus marinus (strain MIT 9515) protein is 4-hydroxy-3-methylbut-2-enyl diphosphate reductase.